The chain runs to 467 residues: Transcription factor fos-1 (467 aa).

A compositionally biased stretch (low complexity) spans 1-22 (MFEQPSSTTNTTTSSGSGSDSN). Disordered stretches follow at residues 1–38 (MFEQPSSTTNTTTSSGSGSDSNHYFELGPRNPINQAHP) and 139–179 (QYST…AAAR). In terms of domain architecture, bZIP spans 163 to 226 (DDKRLKRRQR…NSLKNYLETH (64 aa)). The tract at residues 165–205 (KRLKRRQRNKEAAARCRQRRIDLMKELQDQVNDFKNSNDKK) is basic motif. The interval 212–219 (IRNKLNSL) is leucine-zipper. 2 disordered regions span residues 266–291 (RADSVPYSIRSGHSSSSSEQHSPVED) and 395–467 (QPIT…LRPL). Low complexity predominate over residues 273–286 (SIRSGHSSSSSEQH). A compositionally biased stretch (polar residues) spans 434 to 454 (SSNTGLTPSGQPTMNFVSTPT). Phosphothreonine occurs at positions 440, 452, and 454.

Belongs to the bZIP family. Fos subfamily. As to quaternary structure, homodimer. Heterodimer; with jun-1. Interacts with kgb-1 and hda-1. Post-translationally, may be phosphorylated by kgb-1. Phosphorylation at Thr-440 increases sensitivity to heavy metal stress. Phosphorylation inhibits homodimer formation, and promotes association with target promoters. Expressed in anchor cells. Isoform a is expressed in somatic gonad cells that neighbor anchor cells. Isoform b is expressed in vulval cells, the uterine cells that neighbor anchor cells and the spermatheca.

It localises to the nucleus. Its function is as follows. Developmentally regulated transcription factor which binds and recognizes the enhancer DNA sequence 5'-TGA[CG]TCA-3'. Plays a role the development of the reproductive system, controlling events including anchor cell (AC) fusion and invasion. Regulates downstream transcriptional targets, including zmp-1, cdh-3, him-4 and mig10b, to promote the removal of the gonadal basement membrane during AC invasion. Regulates aff-1 expression to promote AC fusion. With jun-1 regulates egl-1 and lin-12 expression to allow uterine cell specification and development. Functionally, required for ovulation. Controls plc-1 expression in the spermatheca to regulate spermathecal valve dilation. Acts with hda-1 as a downstream repressor of the kgb-1 mediated stress response pathway that transcriptionally represses genes involved in the response to heavy metals, such as kreg-1. The polypeptide is Transcription factor fos-1 (Caenorhabditis elegans).